Reading from the N-terminus, the 346-residue chain is Probable 3-hydroxyacyl-CoA dehydrogenase (346 aa).

The segment at R322 to P346 is disordered.

It belongs to the 3-hydroxyacyl-CoA dehydrogenase family.

The catalysed reaction is a (3S)-3-hydroxyacyl-CoA + NAD(+) = a 3-oxoacyl-CoA + NADH + H(+). The sequence is that of Probable 3-hydroxyacyl-CoA dehydrogenase from Deinococcus radiodurans (strain ATCC 13939 / DSM 20539 / JCM 16871 / CCUG 27074 / LMG 4051 / NBRC 15346 / NCIMB 9279 / VKM B-1422 / R1).